Consider the following 91-residue polypeptide: uncharacterized protein (91 aa).

A disordered region spans residues 71-91 (EANDRPSKKCGSGNLRVEKLV).

This is an uncharacterized protein from Archaeoglobus fulgidus (strain ATCC 49558 / DSM 4304 / JCM 9628 / NBRC 100126 / VC-16).